The sequence spans 89 residues: Long neurotoxin homolog TA-bm16 (89 aa).

The N-terminal stretch at Met1–Thr21 is a signal peptide. 5 disulfides stabilise this stretch: Cys24-Cys45, Cys27-Cys32, Cys38-Cys66, Cys70-Cys81, and Cys82-Cys87.

This sequence belongs to the three-finger toxin family. Ancestral subfamily. Orphan group V sub-subfamily. As to expression, expressed by the venom gland.

It is found in the secreted. Its function is as follows. Exhibits M2 muscarinic acetylcholine receptor (CHRM2)-blocking activity, but has a weak binding activity toward nicotinic AChR. Moreover, it inhibits collagen-induced platelet aggregation. In Bungarus multicinctus (Many-banded krait), this protein is Long neurotoxin homolog TA-bm16.